The primary structure comprises 873 residues: F-box only protein 41 (873 aa).

The span at 85 to 97 shows a compositional bias: polar residues; it reads ESTSFQGKEQATG. Disordered stretches follow at residues 85 to 110, 163 to 193, and 345 to 540; these read ESTS…HHHH, SSAC…SPAD, and SSSC…PSRS. A compositionally biased stretch (pro residues) spans 168-178; sequence TPPPGPGPGPC. Residues 179-192 show a composition bias toward low complexity; sequence SGPSSASPASPSPA. Residues 207–349 are a coiled coil; sequence ALEKLEVDRR…QLQVISSSCG (143 aa). Over residues 357–371 the composition is skewed to gly residues; that stretch reads GRGGGGSASGPGVRG. R358 is modified (omega-N-methylarginine). 2 stretches are compositionally biased toward polar residues: residues 384–414 and 442–456; these read VPST…SSGC and AQAT…QAPR. S476 is modified (phosphoserine). T477 is modified (phosphothreonine). Residues 548–592 enclose the F-box domain; the sequence is ILKMRAALFCIFTYLDTRTLLHAAEVCRDWRFVARHPAVWTRVLL. S760 is modified (phosphoserine).

Directly interacts with SKP1 and CUL1.

Functionally, substrate-recognition component of the SCF (SKP1-CUL1-F-box protein)-type E3 ubiquitin ligase complex. This chain is F-box only protein 41 (Fbxo41), found in Mus musculus (Mouse).